The following is a 396-amino-acid chain: 3-hydroxykynurenine transaminase (396 aa).

The tract at residues 43 to 44 (SN) is binds to and confers specificity for 3-hydroxykynurenine; shared with dimeric partner. Pyridoxal 5'-phosphate contacts are provided by residues 77–79 (SAH), S154, and Q204. Substrate is bound at residue S154. The residue at position 205 (K205) is an N6-(pyridoxal phosphate)lysine. Residues Y256 and T259 each coordinate pyridoxal 5'-phosphate. R356 is a substrate binding site.

It belongs to the class-V pyridoxal-phosphate-dependent aminotransferase family. In terms of assembly, homodimer. Requires pyridoxal 5'-phosphate as cofactor. In terms of tissue distribution, expressed in gut and ovaries.

The protein localises to the peroxisome. It catalyses the reaction L-kynurenine + glyoxylate = kynurenate + glycine + H2O. It carries out the reaction 3-hydroxy-L-kynurenine + glyoxylate = xanthurenate + glycine + H2O. The enzyme catalyses 3-hydroxy-L-kynurenine + pyruvate = xanthurenate + L-alanine + H2O. The catalysed reaction is glyoxylate + L-alanine = glycine + pyruvate. It functions in the pathway amino-acid degradation; L-kynurenine degradation; kynurenate from L-kynurenine: step 1/2. Its function is as follows. Catalyzes the pyridoxal 5'-phosphate-dependent transamination of both 3-hydroxykynurenine and L-kynurenine to xanthurenic acid and kynurenic acid, respectively, preferentially using the alpha-ketoacid glyoxylate as the amino group acceptor. Although glyoxylate is the preferred amino group acceptor, transamination of 3-hydroxykynurenine also works with pyruvate as the amino acceptor in vitro. Involved in the detoxification of cytotoxic metabolite 3-hydroxykynurenine generated by the hydroxylation of L-kynurenine, an intermediate in the tryptophan catabolism pathway. The Plasmodium parasite uses xanthurenic acid produced in the midgut to activate its gametocytes ingested during a blood meal. Also catalyzes, although with a lesser efficiency, the transamination of alanine with glyoxylate as an amino group acceptor. May play a role in the detoxification of glyoxylate, a toxic plant metabolite from the diet. This is 3-hydroxykynurenine transaminase from Anopheles gambiae (African malaria mosquito).